A 152-amino-acid chain; its full sequence is UPF0266 membrane protein Ent638_2389 (152 aa).

A run of 3 helical transmembrane segments spans residues 6–26 (IVLVLFIVALLAYAFYDEFIM), 45–65 (VDAFIFAGLLAILIYNNVMSQ), and 67–87 (ALLTTWLLCVLALMAFYLFWI).

The protein belongs to the UPF0266 family.

The protein localises to the cell inner membrane. The sequence is that of UPF0266 membrane protein Ent638_2389 from Enterobacter sp. (strain 638).